The following is a 485-amino-acid chain: Sulfated surface glycoprotein 185 (485 aa).

Positions 1-20 (MSKLLLVALFGAIAVVATSA) are cleaved as a signal peptide. An N-linked (GlcNAc...) asparagine glycan is attached at asparagine 193. The interval 212 to 317 (LSGPNVNPIG…PPVPPPPSPP (106 aa)) is disordered. 2 stretches are compositionally biased toward pro residues: residues 221–234 (GPAP…PSPQ) and 241–317 (PPSP…PSPP). N-linked (GlcNAc...) asparagine glycosylation occurs at asparagine 347.

In terms of assembly, polymer. Intersubunit cross-links are formed between saccharide chains rather than between polypeptide chains. Post-translationally, hydroxylated on proline residues in the Pro-rich central domain. In terms of processing, glycosylated; contains sulfate-substituted glycans.

The extracellular matrix (ECM) of Volvox contains insoluble fibrous layers that surround individual cells at a distance to form contiguous cellular compartments. SSG 185 is the monomeric precursor of this substructure (C3Z structure). The chain is Sulfated surface glycoprotein 185 from Volvox carteri (Green alga).